A 124-amino-acid chain; its full sequence is Group 1 truncated hemoglobin GlbN (124 aa).

Residues histidine 46, histidine 70, and histidine 117 each contribute to the heme site.

This sequence belongs to the truncated hemoglobin family. Group I subfamily. Monomer. Heme serves as cofactor.

Functionally, forms a very stable complex with oxygen. The oxygen dissociation rate is 0.011 sec(-1). The polypeptide is Group 1 truncated hemoglobin GlbN (glbN) (Synechocystis sp. (strain ATCC 27184 / PCC 6803 / Kazusa)).